Reading from the N-terminus, the 187-residue chain is Casparian strip membrane protein 5 (187 aa).

Over 1-24 (MKSGQAEIVETSKGIQKSGLMSRR) the chain is Cytoplasmic. The helical transmembrane segment at 25–45 (IAILEFILRIVAFFNTIGSAI) threads the bilayer. At 46 to 74 (LMGTTHETLPFFTQFIRFQAEYNDLPALT) the chain is on the extracellular side. The helical transmembrane segment at 75-95 (FFVVANAVVSGYLIMSLTLAF) threads the bilayer. Over 96–107 (VHIVKRKTQNTR) the chain is Cytoplasmic. The helical transmembrane segment at 108-128 (ILLIVLDVAMLGLLSAGASSA) threads the bilayer. Over 129-161 (AAIVYLAHNGNNKTNWFAICQQFNSFCERISGS) the chain is Extracellular. An N-linked (GlcNAc...) asparagine glycan is attached at Asn-140. A helical membrane pass occupies residues 162-182 (LIGSFIAVVLLILLILLSAIA). At 183-187 (LSRRH) the chain is on the cytoplasmic side.

It belongs to the Casparian strip membrane proteins (CASP) family. In terms of assembly, homodimer and heterodimers.

It localises to the cell membrane. In terms of biological role, regulates membrane-cell wall junctions and localized cell wall deposition. Required for establishment of the Casparian strip membrane domain (CSD) and the subsequent formation of Casparian strips, a cell wall modification of the root endodermis that determines an apoplastic barrier between the intraorganismal apoplasm and the extraorganismal apoplasm and prevents lateral diffusion. The chain is Casparian strip membrane protein 5 from Arabidopsis lyrata subsp. lyrata (Lyre-leaved rock-cress).